The chain runs to 428 residues: Dihydroorotase (428 aa).

The Zn(2+) site is built by H59 and H61. Residues 61–63 (HLR) and N93 each bind substrate. The Zn(2+) site is built by D151, H178, and H231. N277 serves as a coordination point for substrate. D304 serves as a coordination point for Zn(2+). Residue D304 is part of the active site. Substrate is bound by residues H308 and 322 to 323 (FG).

It belongs to the metallo-dependent hydrolases superfamily. DHOase family. Class I DHOase subfamily. Zn(2+) is required as a cofactor.

It catalyses the reaction (S)-dihydroorotate + H2O = N-carbamoyl-L-aspartate + H(+). The protein operates within pyrimidine metabolism; UMP biosynthesis via de novo pathway; (S)-dihydroorotate from bicarbonate: step 3/3. Functionally, catalyzes the reversible cyclization of carbamoyl aspartate to dihydroorotate. This Bacillus cereus (strain AH187) protein is Dihydroorotase.